The following is a 371-amino-acid chain: Monomethylxanthine methyltransferase 2 (371 aa).

S-adenosyl-L-homocysteine contacts are provided by Tyr18, Cys61, Asn66, Asp100, Leu101, Ser139, Phe140, and Cys156. Residues Tyr157, His160, and Trp161 each contribute to the theobromine site. Mg(2+) is bound by residues Asn178, Asp260, Phe262, and Asn263. Tyr355 provides a ligand contact to theobromine.

The protein belongs to the methyltransferase superfamily. Type-7 methyltransferase family. Mg(2+) serves as cofactor.

The catalysed reaction is 7-methylxanthine + S-adenosyl-L-methionine = theobromine + S-adenosyl-L-homocysteine + H(+). It functions in the pathway alkaloid biosynthesis. Involved in the biosynthesis of caffeine. Catalyzes the conversion of 7-methylxanthine (7mX) to theobromine and with a lower activity of paraxanthine to caffeine. This is Monomethylxanthine methyltransferase 2 from Coffea canephora (Robusta coffee).